A 74-amino-acid chain; its full sequence is ATP synthase subunit c (74 aa).

The next 2 helical transmembrane spans lie at 8-28 (FIGTGLMAIGMYGAALGVSNI) and 52-72 (IGAGLAEAMGLFSFVIAMLLI).

This sequence belongs to the ATPase C chain family. In terms of assembly, F-type ATPases have 2 components, F(1) - the catalytic core - and F(0) - the membrane proton channel. F(1) has five subunits: alpha(3), beta(3), gamma(1), delta(1), epsilon(1). F(0) has three main subunits: a(1), b(2) and c(10-14). The alpha and beta chains form an alternating ring which encloses part of the gamma chain. F(1) is attached to F(0) by a central stalk formed by the gamma and epsilon chains, while a peripheral stalk is formed by the delta and b chains.

The protein resides in the cell inner membrane. In terms of biological role, f(1)F(0) ATP synthase produces ATP from ADP in the presence of a proton or sodium gradient. F-type ATPases consist of two structural domains, F(1) containing the extramembraneous catalytic core and F(0) containing the membrane proton channel, linked together by a central stalk and a peripheral stalk. During catalysis, ATP synthesis in the catalytic domain of F(1) is coupled via a rotary mechanism of the central stalk subunits to proton translocation. Key component of the F(0) channel; it plays a direct role in translocation across the membrane. A homomeric c-ring of between 10-14 subunits forms the central stalk rotor element with the F(1) delta and epsilon subunits. In Rickettsia conorii (strain ATCC VR-613 / Malish 7), this protein is ATP synthase subunit c.